Reading from the N-terminus, the 476-residue chain is RuvB-like helicase 2 (476 aa).

Residue 72–80 coordinates ATP; sequence VGPPSTGKT.

Belongs to the RuvB family. As to quaternary structure, may form heterododecamers with RVB1. Component of the SWR1 chromatin remodeling complex, the INO80 chromatin remodeling complex, and of the R2TP complex.

The protein resides in the nucleus. It catalyses the reaction ATP + H2O = ADP + phosphate + H(+). Functionally, DNA helicase which participates in several chromatin remodeling complexes, including the SWR1 and the INO80 complexes. The SWR1 complex mediates the ATP-dependent exchange of histone H2A for the H2A variant HZT1 leading to transcriptional regulation of selected genes by chromatin remodeling. The INO80 complex remodels chromatin by shifting nucleosomes and is involved in DNA repair. Also involved in pre-rRNA processing. The sequence is that of RuvB-like helicase 2 (RVB2) from Mycosarcoma maydis (Corn smut fungus).